We begin with the raw amino-acid sequence, 500 residues long: Glycerol kinase (500 aa).

Residue Thr-12 participates in ADP binding. 3 residues coordinate ATP: Thr-12, Thr-13, and Ser-14. Thr-12 provides a ligand contact to sn-glycerol 3-phosphate. Arg-16 is an ADP binding site. Sn-glycerol 3-phosphate is bound by residues Arg-82, Glu-83, Tyr-135, and Asp-245. Residues Arg-82, Glu-83, Tyr-135, Asp-245, and Gln-246 each coordinate glycerol. Residues Thr-267 and Gly-310 each contribute to the ADP site. The ATP site is built by Thr-267, Gly-310, Gln-314, and Gly-411. Residues Gly-411 and Asn-415 each coordinate ADP.

The protein belongs to the FGGY kinase family. As to quaternary structure, homotetramer and homodimer (in equilibrium).

It carries out the reaction glycerol + ATP = sn-glycerol 3-phosphate + ADP + H(+). It functions in the pathway polyol metabolism; glycerol degradation via glycerol kinase pathway; sn-glycerol 3-phosphate from glycerol: step 1/1. Its activity is regulated as follows. Activated by phosphorylation and inhibited by fructose 1,6-bisphosphate (FBP). Functionally, key enzyme in the regulation of glycerol uptake and metabolism. Catalyzes the phosphorylation of glycerol to yield sn-glycerol 3-phosphate. The chain is Glycerol kinase from Clostridium perfringens (strain ATCC 13124 / DSM 756 / JCM 1290 / NCIMB 6125 / NCTC 8237 / Type A).